A 155-amino-acid chain; its full sequence is Ribosome maturation factor RimP (155 aa).

This sequence belongs to the RimP family.

It localises to the cytoplasm. Its function is as follows. Required for maturation of 30S ribosomal subunits. The polypeptide is Ribosome maturation factor RimP (Dichelobacter nodosus (strain VCS1703A)).